The sequence spans 608 residues: Dextranase (608 aa).

A signal peptide spans Met1–Ile19. A propeptide spanning residues Gly20–His34 is cleaved from the precursor. N-linked (GlcNAc...) asparagine glycans are attached at residues Asn39, Asn571, and Asn574.

Belongs to the glycosyl hydrolase 49 family. Post-translationally, N-glycosylated.

Its subcellular location is the secreted. The enzyme catalyses Endohydrolysis of (1-&gt;6)-alpha-D-glucosidic linkages in dextran.. The sequence is that of Dextranase (DEX) from Talaromyces minioluteus (Filamentous fungus).